The primary structure comprises 434 residues: Potassium/proton antiporter CemA (434 aa).

The next 5 membrane-spanning stretches (helical) occupy residues 75–95 (LLEY…SLFF), 210–230 (LASL…SFFF), 311–331 (IVLH…LFIL), 359–379 (ILLL…EIVI), and 395–415 (ISCF…YLIF).

This sequence belongs to the CemA family.

It is found in the plastid. The protein resides in the chloroplast inner membrane. It carries out the reaction K(+)(in) + H(+)(out) = K(+)(out) + H(+)(in). Its function is as follows. Contributes to K(+)/H(+) antiport activity by supporting proton efflux to control proton extrusion and homeostasis in chloroplasts in a light-dependent manner to modulate photosynthesis. Prevents excessive induction of non-photochemical quenching (NPQ) under continuous-light conditions. Indirectly promotes efficient inorganic carbon uptake into chloroplasts. This chain is Potassium/proton antiporter CemA, found in Marchantia polymorpha (Common liverwort).